We begin with the raw amino-acid sequence, 340 residues long: MTKITVVGAGSWGTALAMVLADNGHDVRIWGNRSELMDEINTKHENSRYLPGITLPSTIVAYSSLEEALVDVNVVLLVVPTKAYREVLQDMKKYVAGPTTWIHASKGIEPGTSKRISEVIEEEIPEDLIKDVVVLSGPSHAEEVGLRQATTVTSAAKRMEAAEEVQDLFMNSYFRVYTNPDIVGVELGGALKNIIALAAGITDGLGLGDNAKAALMTRGLTEIARLGRKMGGNPLTFAGLTGMGDLIVTCTSVHSRNWRAGNLLGKGHSLEEVLESMGMVVEGVRTTKAAHELAEKMEVEMPITAALYDVLFNGNNVKDAVGSLMGRVRKHEVEAIPDLL.

Residues Ser11, Trp12, Arg33, and Lys106 each coordinate NADPH. Sn-glycerol 3-phosphate is bound by residues Lys106, Gly137, and Ser139. Ala141 is an NADPH binding site. Residues Lys192, Asp245, Ser255, Arg256, and Asn257 each contribute to the sn-glycerol 3-phosphate site. Lys192 (proton acceptor) is an active-site residue. Arg256 provides a ligand contact to NADPH. 2 residues coordinate NADPH: Val280 and Glu282.

Belongs to the NAD-dependent glycerol-3-phosphate dehydrogenase family.

The protein localises to the cytoplasm. It carries out the reaction sn-glycerol 3-phosphate + NAD(+) = dihydroxyacetone phosphate + NADH + H(+). The catalysed reaction is sn-glycerol 3-phosphate + NADP(+) = dihydroxyacetone phosphate + NADPH + H(+). Its pathway is membrane lipid metabolism; glycerophospholipid metabolism. In terms of biological role, catalyzes the reduction of the glycolytic intermediate dihydroxyacetone phosphate (DHAP) to sn-glycerol 3-phosphate (G3P), the key precursor for phospholipid synthesis. The sequence is that of Glycerol-3-phosphate dehydrogenase [NAD(P)+] from Bacillus cereus (strain ATCC 10987 / NRS 248).